The primary structure comprises 193 residues: Large ribosomal subunit protein bL25 (193 aa).

Belongs to the bacterial ribosomal protein bL25 family. CTC subfamily. As to quaternary structure, part of the 50S ribosomal subunit; part of the 5S rRNA/L5/L18/L25 subcomplex. Contacts the 5S rRNA. Binds to the 5S rRNA independently of L5 and L18.

Its function is as follows. This is one of the proteins that binds to the 5S RNA in the ribosome where it forms part of the central protuberance. The chain is Large ribosomal subunit protein bL25 from Oleidesulfovibrio alaskensis (strain ATCC BAA-1058 / DSM 17464 / G20) (Desulfovibrio alaskensis).